An 81-amino-acid polypeptide reads, in one-letter code: ATP synthase subunit c, chloroplastic (81 aa).

Transmembrane regions (helical) follow at residues 3 to 23 and 57 to 77; these read PLIS…ASIG and LAFM…LLFA.

The protein belongs to the ATPase C chain family. F-type ATPases have 2 components, F(1) - the catalytic core - and F(0) - the membrane proton channel. F(1) has five subunits: alpha(3), beta(3), gamma(1), delta(1), epsilon(1). F(0) has four main subunits: a(1), b(1), b'(1) and c(10-14). The alpha and beta chains form an alternating ring which encloses part of the gamma chain. F(1) is attached to F(0) by a central stalk formed by the gamma and epsilon chains, while a peripheral stalk is formed by the delta, b and b' chains.

The protein resides in the plastid. It localises to the chloroplast thylakoid membrane. In terms of biological role, f(1)F(0) ATP synthase produces ATP from ADP in the presence of a proton or sodium gradient. F-type ATPases consist of two structural domains, F(1) containing the extramembraneous catalytic core and F(0) containing the membrane proton channel, linked together by a central stalk and a peripheral stalk. During catalysis, ATP synthesis in the catalytic domain of F(1) is coupled via a rotary mechanism of the central stalk subunits to proton translocation. Functionally, key component of the F(0) channel; it plays a direct role in translocation across the membrane. A homomeric c-ring of between 10-14 subunits forms the central stalk rotor element with the F(1) delta and epsilon subunits. This chain is ATP synthase subunit c, chloroplastic, found in Pinus koraiensis (Korean pine).